A 148-amino-acid polypeptide reads, in one-letter code: Receptor activity-modifying protein 3 (148 aa).

The N-terminal stretch at 1–23 is a signal peptide; sequence METGALRRPQLLPLLLLLCGGCP. Over 24–113 the chain is Extracellular; sequence RAGGCNETGM…CTVDRVHLED (90 aa). 4 N-linked (GlcNAc...) asparagine glycosylation sites follow: N29, N58, N71, and N103. 2 disulfide bridges follow: C40–C72 and C57–C104. A helical transmembrane segment spans residues 114–138; the sequence is PPDEVLIPLIVIPVVLTVAMAGLVV. At 139–148 the chain is on the cytoplasmic side; sequence WRSKRTDTLL.

Belongs to the RAMP family. In terms of assembly, heterodimer of CALCRL and RAMP3; interaction induces allosteric modulation of CALCRL function and ligand specificity for adrenomedullin/ADM and intermedin/ADM2. Heterodimer of CALCR and RAMP3; interaction form the receptor complex AMYR3 for amylin/IAPP. Interacts with GPER1. As to expression, strongly expressed in lung, breast, immune system and fetal tissues.

The protein resides in the cell membrane. It is found in the membrane. Its function is as follows. Accessory protein that interacts with and modulates the function of G-protein coupled receptors including calcitonin gene-related peptide type 1 receptor (CALCRL), calcitonin receptor (CALCR) and G-protein coupled estrogen receptor 1 (GPER1). Required for the transport of CALCRL and GPER1 receptors to the plasma membrane. Plays a role in cardioprotection by reducing cardiac hypertrophy and perivascular fibrosis in a GPER1-dependent manner. Together with CALCRL, form a receptor complex for adrenomedullin/ADM and intermedin/ADM2. Together with CALCR, act as a receptor complex for amylin/IAPP. The sequence is that of Receptor activity-modifying protein 3 from Homo sapiens (Human).